Consider the following 443-residue polypeptide: Omega-6 fatty acid desaturase, chloroplastic (443 aa).

The N-terminal 64 residues, 1–64 (MASRIADSLF…AKKRIGCIKA (64 aa)), are a transit peptide targeting the chloroplast. The Histidine box-1 signature appears at 166-170 (HDCAH). Positions 202–206 (HDRHH) match the Histidine box-2 motif. The short motif at 362–366 (HIPHH) is the Histidine box-3 element.

It belongs to the fatty acid desaturase type 1 family.

Its subcellular location is the plastid. It localises to the chloroplast membrane. It carries out the reaction a (9Z)-octadecenoyl-containing glycerolipid + 2 reduced [2Fe-2S]-[ferredoxin] + O2 + 2 H(+) = a (9Z,12Z)-octadecadienoyl-containing glycerolipid + 2 oxidized [2Fe-2S]-[ferredoxin] + 2 H2O. The protein operates within lipid metabolism; polyunsaturated fatty acid biosynthesis. Chloroplast omega-6 fatty acid desaturase introduces the second double bond in the biosynthesis of 16:3 and 18:3 fatty acids, important constituents of plant membranes. It is thought to use ferredoxin as an electron donor and to act on fatty acids esterified to galactolipids, sulfolipids and phosphatidylglycerol. This Brassica napus (Rape) protein is Omega-6 fatty acid desaturase, chloroplastic.